We begin with the raw amino-acid sequence, 141 residues long: Hemoglobin subunit alpha-D (141 aa).

In terms of domain architecture, Globin spans 1-141 (MLTADDKKLI…VAAVLAEKYR (141 aa)). Heme b is bound by residues His-58 and His-87.

Belongs to the globin family. Heterotetramer of two alpha-D chains and two beta chains. Red blood cells.

In terms of biological role, involved in oxygen transport from the lung to the various peripheral tissues. This Aegypius monachus (Cinereous vulture) protein is Hemoglobin subunit alpha-D (HBAD).